Here is a 191-residue protein sequence, read N- to C-terminus: General negative regulator of transcription subunit 2 (191 aa).

This sequence belongs to the CNOT2/3/5 family. In terms of assembly, forms a NOT protein complex that comprises NOT1, NOT2, NOT3, NOT4 and NOT5. Subunit of the 1.0 MDa CCR4-NOT core complex that contains CCR4, CAF1, NOT1, NOT2, NOT3, NOT4, NOT5, CAF40 and CAF130. In the complex interacts with NOT1 and NOT5. The core complex probably is part of a less characterized 1.9 MDa CCR4-NOT complex.

It localises to the cytoplasm. It is found in the nucleus. Functionally, acts as a component of the CCR4-NOT core complex, which in the nucleus seems to be a general transcription factor, and in the cytoplasm the major mRNA deadenylase involved in mRNA turnover. NOT2 is required for the integrity of the complex. The NOT protein subcomplex negatively regulates the basal and activated transcription of many genes. Preferentially affects TC-type TATA element-dependent transcription. Could directly or indirectly inhibit component(s) of the general transcription machinery. In Saccharomyces cerevisiae (strain ATCC 204508 / S288c) (Baker's yeast), this protein is General negative regulator of transcription subunit 2 (CDC36).